The following is a 111-amino-acid chain: Large ribosomal subunit protein uL23 (111 aa).

This sequence belongs to the universal ribosomal protein uL23 family. Part of the 50S ribosomal subunit. Contacts protein L29, and trigger factor when it is bound to the ribosome.

In terms of biological role, one of the early assembly proteins it binds 23S rRNA. One of the proteins that surrounds the polypeptide exit tunnel on the outside of the ribosome. Forms the main docking site for trigger factor binding to the ribosome. This chain is Large ribosomal subunit protein uL23, found in Chlamydia muridarum (strain MoPn / Nigg).